Here is a 110-residue protein sequence, read N- to C-terminus: Parvalbumin alpha (110 aa).

S2 carries the N-acetylserine modification. Residues S2, S8, and S24 each carry the phosphoserine modification. 2 consecutive EF-hand domains span residues K39–D74 and L78–S110. Ca(2+)-binding residues include D52, D54, S56, F58, E60, E63, D91, D93, D95, K97, and E102.

Expressed in the modiolar nerve root (at protein level).

Functionally, in muscle, parvalbumin is thought to be involved in relaxation after contraction. It binds two calcium ions. The polypeptide is Parvalbumin alpha (Pvalb) (Mus musculus (Mouse)).